Here is a 76-residue protein sequence, read N- to C-terminus: UPF0248 protein MMP0286 (76 aa).

This sequence belongs to the UPF0248 family.

This chain is UPF0248 protein MMP0286, found in Methanococcus maripaludis (strain DSM 14266 / JCM 13030 / NBRC 101832 / S2 / LL).